The sequence spans 269 residues: Dihydropteroate synthase (269 aa).

The region spanning 14–261 (TYIMGILNFT…DVLENSRAAK (248 aa)) is the Pterin-binding domain. Asn-21 serves as a coordination point for Mg(2+). (7,8-dihydropterin-6-yl)methyl diphosphate-binding positions include Thr-61, Asp-95, Asn-114, Asp-178, Lys-214, and 249–251 (RVH).

It belongs to the DHPS family. Mg(2+) serves as cofactor.

The enzyme catalyses (7,8-dihydropterin-6-yl)methyl diphosphate + 4-aminobenzoate = 7,8-dihydropteroate + diphosphate. It participates in cofactor biosynthesis; tetrahydrofolate biosynthesis; 7,8-dihydrofolate from 2-amino-4-hydroxy-6-hydroxymethyl-7,8-dihydropteridine diphosphate and 4-aminobenzoate: step 1/2. In terms of biological role, catalyzes the condensation of para-aminobenzoate (pABA) with 6-hydroxymethyl-7,8-dihydropterin diphosphate (DHPt-PP) to form 7,8-dihydropteroate (H2Pte), the immediate precursor of folate derivatives. The polypeptide is Dihydropteroate synthase (Clostridium beijerinckii (strain ATCC 51743 / NCIMB 8052) (Clostridium acetobutylicum)).